Here is a 264-residue protein sequence, read N- to C-terminus: Ribonuclease HII (264 aa).

Positions 33 to 224 (GPVAGVDEVG…VRRVASGSNT (192 aa)) constitute an RNase H type-2 domain. The a divalent metal cation site is built by aspartate 39, glutamate 40, and aspartate 133. The disordered stretch occupies residues 222 to 264 (SNTAEVADGQPDPRDGTAQTGEGRWSKSSHPATMRATGRAQGT).

This sequence belongs to the RNase HII family. Mn(2+) is required as a cofactor. Mg(2+) serves as cofactor.

It localises to the cytoplasm. The catalysed reaction is Endonucleolytic cleavage to 5'-phosphomonoester.. In terms of biological role, endonuclease that specifically degrades the RNA of RNA-DNA hybrids. This chain is Ribonuclease HII, found in Mycobacterium bovis (strain BCG / Pasteur 1173P2).